We begin with the raw amino-acid sequence, 501 residues long: GTPase Obg (501 aa).

One can recognise an Obg domain in the interval 2 to 159; it reads NRFIDRVVLH…HDLILELKSM (158 aa). One can recognise an OBG-type G domain in the interval 160–341; it reads ADVGLVGFPS…LKYKLLEIVQ (182 aa). GTP contacts are provided by residues 166–173, 191–195, 212–215, 292–295, and 322–324; these read GFPSAGKS, FTTLQ, DVPG, NKAD, and SAV. The Mg(2+) site is built by serine 173 and threonine 193. The OCT domain occupies 362–442; sequence VDHRTKGQFQ…IGGISFEWEP (81 aa).

Belongs to the TRAFAC class OBG-HflX-like GTPase superfamily. OBG GTPase family. Monomer. Mg(2+) serves as cofactor.

The protein resides in the cytoplasm. In terms of biological role, an essential GTPase which binds GTP, GDP and possibly (p)ppGpp with moderate affinity, with high nucleotide exchange rates and a fairly low GTP hydrolysis rate. Plays a role in control of the cell cycle, stress response, ribosome biogenesis and in those bacteria that undergo differentiation, in morphogenesis control. In Corynebacterium glutamicum (strain R), this protein is GTPase Obg.